We begin with the raw amino-acid sequence, 28 residues long: Ranatuerin-2SEb (28 aa).

A disulfide bridge connects residues C23 and C28.

Expressed by the skin glands.

Its subcellular location is the secreted. Its function is as follows. Mast cell degranulating peptide. Causes histamine release from rat peritoneal mast cells in vitro. Has antibacterial activity against the Gram-negative bacterium E.coli K12 and Gram-positive bacterium M.luteus NCT C2665. This Lithobates sevosus (Dusky gopher frog) protein is Ranatuerin-2SEb.